The following is a 266-amino-acid chain: Urease accessory protein UreD (266 aa).

The protein belongs to the UreD family. In terms of assembly, ureD, UreF and UreG form a complex that acts as a GTP-hydrolysis-dependent molecular chaperone, activating the urease apoprotein by helping to assemble the nickel containing metallocenter of UreC. The UreE protein probably delivers the nickel.

Its subcellular location is the cytoplasm. Functionally, required for maturation of urease via the functional incorporation of the urease nickel metallocenter. The chain is Urease accessory protein UreD from Jannaschia sp. (strain CCS1).